The chain runs to 150 residues: UPF0178 protein BamMC406_1579 (150 aa).

The protein belongs to the UPF0178 family.

The polypeptide is UPF0178 protein BamMC406_1579 (Burkholderia ambifaria (strain MC40-6)).